The sequence spans 540 residues: Chaperonin GroEL (540 aa).

ATP contacts are provided by residues 29–32 (TLGP), 86–90 (DGTTT), Gly-413, 476–478 (NAA), and Asp-492.

The protein belongs to the chaperonin (HSP60) family. In terms of assembly, forms a cylinder of 14 subunits composed of two heptameric rings stacked back-to-back. Interacts with the co-chaperonin GroES.

Its subcellular location is the cytoplasm. The catalysed reaction is ATP + H2O + a folded polypeptide = ADP + phosphate + an unfolded polypeptide.. Together with its co-chaperonin GroES, plays an essential role in assisting protein folding. The GroEL-GroES system forms a nano-cage that allows encapsulation of the non-native substrate proteins and provides a physical environment optimized to promote and accelerate protein folding. The protein is Chaperonin GroEL of Streptococcus pneumoniae (strain P1031).